A 518-amino-acid chain; its full sequence is Glutamate--cysteine ligase (518 aa).

It belongs to the glutamate--cysteine ligase type 1 family. Type 1 subfamily.

It carries out the reaction L-cysteine + L-glutamate + ATP = gamma-L-glutamyl-L-cysteine + ADP + phosphate + H(+). It functions in the pathway sulfur metabolism; glutathione biosynthesis; glutathione from L-cysteine and L-glutamate: step 1/2. This Shigella dysenteriae serotype 1 (strain Sd197) protein is Glutamate--cysteine ligase.